Consider the following 212-residue polypeptide: uncharacterized protein (212 aa).

2 disordered regions span residues 1–148 and 168–190; these read MEKD…LNDL and EVVTDAKKEEKPSQMDVEDLSED. A compositionally biased stretch (basic and acidic residues) spans 61–70; sequence KELESEDQGK. Positions 71–85 are enriched in polar residues; the sequence is DPSSNAEDASCQKNL. 3 stretches are compositionally biased toward basic and acidic residues: residues 99–115, 124–144, and 168–180; these read LGHESGKQDPEREKSDL, EGEHADGGLQEAKEQEAESIK, and EVVTDAKKEEKPS.

This is an uncharacterized protein from Homo sapiens (Human).